The primary structure comprises 660 residues: U-box domain-containing protein 13 (660 aa).

Residues 227-252 (DDNGEEQKVGVNSRSNGQTSTAASQK) are disordered. The segment covering 236–250 (GVNSRSNGQTSTAAS) has biased composition (polar residues). The region spanning 255–329 (VIPDDFRCPI…AQWCEANDIE (75 aa)) is the U-box domain. 5 ARM repeats span residues 384-423 (ADNR…NLSI), 425-464 (ENNK…SLSV), 466-505 (DENK…NLCI), 507-546 (QGNK…ILSS), and 548-587 (PEGK…HLCS). The disordered stretch occupies residues 631 to 660 (AEQQKETAVSQPEEEAEPTHPESTTEAADT). The span at 651–660 (PESTTEAADT) shows a compositional bias: polar residues.

As to quaternary structure, binds to SD11, SD16, SD17, SD18, SD113, SD129 and SD25. Post-translationally, phosphorylated by SD1-6 and SD1-7.

Its subcellular location is the nucleus. The protein resides in the cytoplasm. The catalysed reaction is S-ubiquitinyl-[E2 ubiquitin-conjugating enzyme]-L-cysteine + [acceptor protein]-L-lysine = [E2 ubiquitin-conjugating enzyme]-L-cysteine + N(6)-ubiquitinyl-[acceptor protein]-L-lysine.. It functions in the pathway protein modification; protein ubiquitination. Functionally, functions as an E3 ubiquitin ligase. This chain is U-box domain-containing protein 13 (PUB13), found in Arabidopsis thaliana (Mouse-ear cress).